The primary structure comprises 231 residues: Histidine biosynthesis bifunctional protein HisIE (231 aa).

Positions 1–130 (MQDVFRQIDW…QKYPIGVYHI (130 aa)) are phosphoribosyl-AMP cyclohydrolase. The tract at residues 131-231 (LDDLYHIIEQ…GIEEKASRKH (101 aa)) is phosphoribosyl-ATP pyrophosphohydrolase.

In the N-terminal section; belongs to the PRA-CH family. The protein in the C-terminal section; belongs to the PRA-PH family.

The protein resides in the cytoplasm. It carries out the reaction 1-(5-phospho-beta-D-ribosyl)-ATP + H2O = 1-(5-phospho-beta-D-ribosyl)-5'-AMP + diphosphate + H(+). It catalyses the reaction 1-(5-phospho-beta-D-ribosyl)-5'-AMP + H2O = 1-(5-phospho-beta-D-ribosyl)-5-[(5-phospho-beta-D-ribosylamino)methylideneamino]imidazole-4-carboxamide. Its pathway is amino-acid biosynthesis; L-histidine biosynthesis; L-histidine from 5-phospho-alpha-D-ribose 1-diphosphate: step 2/9. It participates in amino-acid biosynthesis; L-histidine biosynthesis; L-histidine from 5-phospho-alpha-D-ribose 1-diphosphate: step 3/9. This is Histidine biosynthesis bifunctional protein HisIE from Helicobacter hepaticus (strain ATCC 51449 / 3B1).